Reading from the N-terminus, the 406-residue chain is MYENISTMDDFEFENKWVLLRIDINSTVIDGKIEDDERIKRHLGTIKELMEHDARVAILAHQGRPGEDDFTTLEPHAEIMSEELDNFEYVPDVFGPTAKKKIRSLEPGEVILLENVRFYSEERINRDPEWHARRHLVRNLAPLFDIFVNDAFAAAHRSNASLVGFTRRLPSCVGRVMEREIEVLETMVRDEMEDGVFVIGGSKIEDAIKVIRRAIEMDNVRRVLLGGLVGNLFLWASGVDLGKPSRKFLDMKGYTGYLDEARELLEEGDDVILVPEDVALNRGGEREEVDVDELPADAPVFDIGTGTIERYRKEVESAGMVVANGPMGVYEEPGFEKGTYEVLNAIADSEAFSVIGGGHIIAAAKACGAYDSIDHVSTGGGAMLRMLAGERLPAIDAILTCPFSGC.

Residues 23–25 (DIN), R38, 61–64 (HQGR), R117, and R157 contribute to the substrate site. Residues E331 and 357-360 (GGHI) contribute to the ATP site.

Belongs to the phosphoglycerate kinase family. As to quaternary structure, monomer.

Its subcellular location is the cytoplasm. It catalyses the reaction (2R)-3-phosphoglycerate + ATP = (2R)-3-phospho-glyceroyl phosphate + ADP. Its pathway is carbohydrate degradation; glycolysis; pyruvate from D-glyceraldehyde 3-phosphate: step 2/5. This chain is Phosphoglycerate kinase, found in Methanopyrus kandleri (strain AV19 / DSM 6324 / JCM 9639 / NBRC 100938).